We begin with the raw amino-acid sequence, 406 residues long: Imidazolonepropionase (406 aa).

The Fe(3+) site is built by His-65 and His-67. Zn(2+) contacts are provided by His-65 and His-67. 4-imidazolone-5-propanoate is bound by residues Arg-74, Tyr-137, and His-170. Tyr-137 is a binding site for N-formimidoyl-L-glutamate. Residue His-235 coordinates Fe(3+). His-235 lines the Zn(2+) pocket. Gln-238 contributes to the 4-imidazolone-5-propanoate binding site. Asp-310 serves as a coordination point for Fe(3+). Residue Asp-310 participates in Zn(2+) binding. N-formimidoyl-L-glutamate is bound by residues Asn-312 and Gly-314. Thr-315 serves as a coordination point for 4-imidazolone-5-propanoate.

The protein belongs to the metallo-dependent hydrolases superfamily. HutI family. Requires Zn(2+) as cofactor. It depends on Fe(3+) as a cofactor.

The protein localises to the cytoplasm. It carries out the reaction 4-imidazolone-5-propanoate + H2O = N-formimidoyl-L-glutamate. The protein operates within amino-acid degradation; L-histidine degradation into L-glutamate; N-formimidoyl-L-glutamate from L-histidine: step 3/3. Its function is as follows. Catalyzes the hydrolytic cleavage of the carbon-nitrogen bond in imidazolone-5-propanoate to yield N-formimidoyl-L-glutamate. It is the third step in the universal histidine degradation pathway. In Vibrio vulnificus (strain YJ016), this protein is Imidazolonepropionase.